We begin with the raw amino-acid sequence, 176 residues long: Envelope protein 167 (176 aa).

A topological domain (intravirion) is located at residue Met-1. The helical transmembrane segment at 2-22 threads the bilayer; sequence YLVLLIAIILFITIILVIFLI. The Virion surface segment spans residues 23 to 176; that stretch reads SGLFYPEQNP…AVMAIPRKVL (154 aa).

This sequence belongs to the asfivirus envelope protein p22 family.

The protein localises to the virion membrane. Its subcellular location is the host cell membrane. This chain is Envelope protein 167, found in African swine fever virus (isolate Warthog/Namibia/Wart80/1980) (ASFV).